Reading from the N-terminus, the 795-residue chain is Volume-regulated anion channel subunit LRRC8E (795 aa).

At 1 to 22 (MIPVAEFKQFTEQQPAFKVLKP) the chain is on the cytoplasmic side. A helical membrane pass occupies residues 23–43 (WWDVLAEYLTVAMLMIGVFGC). Residues 44–116 (TLQVTQDKII…YETALHWYAK (73 aa)) are Extracellular-facing. A disulfide bridge links Cys-54 with Cys-300. Residue Asn-63 is glycosylated (N-linked (GlcNAc...) asparagine). The chain crosses the membrane as a helical span at residues 117–137 (YFPYLVVIHTLIFMVCTSFWF). Residues 138-264 (KFPGTSSKIE…IRQTVLKVCK (127 aa)) are Cytoplasmic-facing. The helical transmembrane segment at 265–285 (FFAILVYNLIYVEKISFLVAC) threads the bilayer. The Extracellular portion of the chain corresponds to 286–312 (RVETSEITGYASFCCNHTKAHLFSKLA). N-linked (GlcNAc...) asparagine glycosylation is present at Asn-301. A helical transmembrane segment spans residues 313–333 (FCYISFVCVYGITCLYTLYWL). Residues 334-795 (FHRPLKEYSF…AEVREKMEEE (462 aa)) are Cytoplasmic-facing. LRR repeat units follow at residues 535–556 (QLKV…TDVA), 558–578 (HLQR…NSLK), 582–603 (VLRE…IFSL), 605–626 (ALQE…LSFQ), 630–651 (KLVT…VRKL), 653–674 (SLEQ…LGQC), 676–697 (GLRL…LGLL), 699–720 (SLQH…LFFC), 722–744 (KLRT…AALQ), and 745–766 (ALSR…LGDC).

The protein belongs to the LRRC8 family. Heterohexamer; oligomerizes with other LRRC8 proteins (LRRC8A, LRRC8C, LRRC8D and/or LRRC8B) to form a heterohexamer. In vivo, the subunit composition may depend primarily on expression levels, and heterooligomeric channels containing various proportions of the different LRRC8 proteins may coexist.

The protein localises to the cell membrane. Its subcellular location is the endoplasmic reticulum membrane. It is found in the lysosome membrane. It catalyses the reaction chloride(in) = chloride(out). The enzyme catalyses iodide(out) = iodide(in). It carries out the reaction taurine(out) = taurine(in). The catalysed reaction is 2',3'-cGAMP(out) = 2',3'-cGAMP(in). Non-essential component of the volume-regulated anion channel (VRAC, also named VSOAC channel), an anion channel required to maintain a constant cell volume in response to extracellular or intracellular osmotic changes. The VRAC channel conducts iodide better than chloride and can also conduct organic osmolytes like taurine. Mediates efflux of amino acids, such as aspartate, in response to osmotic stress. The VRAC channel also mediates transport of immunoreactive cyclic dinucleotide GMP-AMP (2'-3'-cGAMP), an immune messenger produced in response to DNA virus in the cytosol. Channel activity requires LRRC8A plus at least one other family member (LRRC8B, LRRC8C, LRRC8D or LRRC8E); channel characteristics depend on the precise subunit composition. Also plays a role in lysosome homeostasis by forming functional lysosomal VRAC channels in response to low cytoplasmic ionic strength condition: lysosomal VRAC channels are necessary for the formation of large lysosome-derived vacuoles, which store and then expel excess water to maintain cytosolic water homeostasis. The protein is Volume-regulated anion channel subunit LRRC8E of Mus musculus (Mouse).